We begin with the raw amino-acid sequence, 670 residues long: Catalase (670 aa).

Catalysis depends on residues His-61 and Asn-132. Tyr-345 serves as a coordination point for heme.

This sequence belongs to the catalase family. In terms of assembly, homotetramer. Heme is required as a cofactor.

The protein resides in the peroxisome matrix. The enzyme catalyses 2 H2O2 = O2 + 2 H2O. Catalyzes the degradation of hydrogen peroxide (H(2)O(2)) generated by peroxisomal oxidases to water and oxygen, thereby protecting cells from the toxic effects of hydrogen peroxide. This chain is Catalase, found in Penicillium janthinellum (Penicillium vitale).